Consider the following 270-residue polypeptide: Imidazole glycerol phosphate synthase subunit HisF (270 aa).

Catalysis depends on residues Asp-11 and Asp-130.

This sequence belongs to the HisA/HisF family. In terms of assembly, heterodimer of HisH and HisF.

Its subcellular location is the cytoplasm. The catalysed reaction is 5-[(5-phospho-1-deoxy-D-ribulos-1-ylimino)methylamino]-1-(5-phospho-beta-D-ribosyl)imidazole-4-carboxamide + L-glutamine = D-erythro-1-(imidazol-4-yl)glycerol 3-phosphate + 5-amino-1-(5-phospho-beta-D-ribosyl)imidazole-4-carboxamide + L-glutamate + H(+). It functions in the pathway amino-acid biosynthesis; L-histidine biosynthesis; L-histidine from 5-phospho-alpha-D-ribose 1-diphosphate: step 5/9. Functionally, IGPS catalyzes the conversion of PRFAR and glutamine to IGP, AICAR and glutamate. The HisF subunit catalyzes the cyclization activity that produces IGP and AICAR from PRFAR using the ammonia provided by the HisH subunit. The polypeptide is Imidazole glycerol phosphate synthase subunit HisF (Chloroflexus aggregans (strain MD-66 / DSM 9485)).